Reading from the N-terminus, the 63-residue chain is Toxin Cn11 (63 aa).

The LCN-type CS-alpha/beta domain occupies 2 to 63 (RDGYPVDEKG…KVWTYETNTC (62 aa)). 4 cysteine pairs are disulfide-bonded: Cys12–Cys63, Cys16–Cys37, Cys23–Cys44, and Cys27–Cys46.

It belongs to the long (4 C-C) scorpion toxin superfamily. Sodium channel inhibitor family. Expressed by the venom gland.

The protein localises to the secreted. Functionally, first blocker of sodium channels (Nav) found in scorpions. Is lethal to crustaceans (Cambarellus montezumae), less toxic to insects (crickets) and non-toxic to mammals (mice) at the doses assayed. The chain is Toxin Cn11 from Centruroides noxius (Mexican scorpion).